The chain runs to 133 residues: ATP synthase epsilon chain, chloroplastic (133 aa).

Belongs to the ATPase epsilon chain family. F-type ATPases have 2 components, CF(1) - the catalytic core - and CF(0) - the membrane proton channel. CF(1) has five subunits: alpha(3), beta(3), gamma(1), delta(1), epsilon(1). CF(0) has three main subunits: a, b and c.

It localises to the plastid. Its subcellular location is the chloroplast thylakoid membrane. In terms of biological role, produces ATP from ADP in the presence of a proton gradient across the membrane. In Psilotum nudum (Whisk fern), this protein is ATP synthase epsilon chain, chloroplastic.